A 235-amino-acid polypeptide reads, in one-letter code: Ribonuclease PH (235 aa).

Phosphate-binding positions include Arg86 and 124–126; that span reads GTR.

The protein belongs to the RNase PH family. As to quaternary structure, homohexameric ring arranged as a trimer of dimers.

The catalysed reaction is tRNA(n+1) + phosphate = tRNA(n) + a ribonucleoside 5'-diphosphate. In terms of biological role, phosphorolytic 3'-5' exoribonuclease that plays an important role in tRNA 3'-end maturation. Removes nucleotide residues following the 3'-CCA terminus of tRNAs; can also add nucleotides to the ends of RNA molecules by using nucleoside diphosphates as substrates, but this may not be physiologically important. Probably plays a role in initiation of 16S rRNA degradation (leading to ribosome degradation) during starvation. In Legionella pneumophila (strain Paris), this protein is Ribonuclease PH.